We begin with the raw amino-acid sequence, 70 residues long: Large ribosomal subunit protein bL31 (70 aa).

C16, C18, C37, and C40 together coordinate Zn(2+).

Belongs to the bacterial ribosomal protein bL31 family. Type A subfamily. In terms of assembly, part of the 50S ribosomal subunit. The cofactor is Zn(2+).

Functionally, binds the 23S rRNA. This chain is Large ribosomal subunit protein bL31, found in Enterobacter sp. (strain 638).